Reading from the N-terminus, the 874-residue chain is MKVTQIRQAYLDFFAQKGHQIVPSSPVVPGDDPTLLFTNAGMNQFKDVFLGFDKRSYTRATTAQKCIRAGGKHNDLDNVGYTARHHTFFEMLGNFSFGDYFKKDAIQFAWDLLTQVFELPKDKLLVTVYAEDDEAYAIWKDQIGVPAERIIRIGDNKGARYASDNFWMMGDTGPCGPCTEIFYDHGEHIPGGPPGSPDEDGDRFIEIWNNVFMQFNRDEAGVMHPLPKPSVDTGMGLERIAAVLQHVHSNYEIDLFVNLIKAAKDTVDGAGGENCDAQSPSLKVIADHIRACSFIVVDGVIPGNAGRGYVLRRIARRAIRHGYKLGARKPFFYQLVPALVKEMGDAYPELRAAQDKVSEVLKQEEERFFQTIANGMEILDGALAGGAKVVDGETAFRLHDTFGFPLDLTADVCRERGVTVDSEGFEVAMQKQRDQARAAGKFKVAQGLDYKGVPTRFHGYETLKHEGAKITALYLDGSAVNSVKAGDAAVVVLDNTPFYAESGGQVGDKGELRNEAARFTVDDTFKIQADVFGHQGEVLEGELKVGDTLNALVDIALRNDTMRNHSATHILHKALREVLGDHVQQKGSLVDASKTRFDFTHNAPITAEQIRRIEDIVNAEILDNSATSGKVMSLEDAQKTGAMMLFGEKYGDEVRVLEIGSSKELCGGTHVSRTGDIGSLKIVSEGGVAAGIRRVEAVTGQNALHFLQGLEDKINEAATILKTHPGDLVNRVAQLQESLRLAERELEKVNSKLAASQGDELAGQAIDVNGLKVLAARLDGADAGVLRETMDALKAKLKTAAIVLASVQGDKVSLIAGVTADSIAKVKAGDLVNFVAQQVGGKGGGKPEMAMAGGNDPSKLGAALDGVKDWVASK.

4 residues coordinate Zn(2+): His-565, His-569, Cys-666, and His-670.

Belongs to the class-II aminoacyl-tRNA synthetase family. Zn(2+) serves as cofactor.

It is found in the cytoplasm. It carries out the reaction tRNA(Ala) + L-alanine + ATP = L-alanyl-tRNA(Ala) + AMP + diphosphate. Catalyzes the attachment of alanine to tRNA(Ala) in a two-step reaction: alanine is first activated by ATP to form Ala-AMP and then transferred to the acceptor end of tRNA(Ala). Also edits incorrectly charged Ser-tRNA(Ala) and Gly-tRNA(Ala) via its editing domain. The chain is Alanine--tRNA ligase from Polynucleobacter asymbioticus (strain DSM 18221 / CIP 109841 / QLW-P1DMWA-1) (Polynucleobacter necessarius subsp. asymbioticus).